The chain runs to 173 residues: Co-chaperone protein HscB homolog (173 aa).

The region spanning 5–77 is the J domain; it reads CHYALFDLQP…PRRARYLLAI (73 aa).

Belongs to the HscB family. In terms of assembly, interacts with HscA and stimulates its ATPase activity.

Functionally, co-chaperone involved in the maturation of iron-sulfur cluster-containing proteins. Seems to help targeting proteins to be folded toward HscA. The chain is Co-chaperone protein HscB homolog from Pseudomonas entomophila (strain L48).